Here is a 759-residue protein sequence, read N- to C-terminus: Solute carrier family 26 member 6 (759 aa).

Residues M1–A115 lie on the Cytoplasmic side of the membrane. The helical transmembrane segment at G116–F136 threads the bilayer. The Extracellular portion of the chain corresponds to G137–T186. Residues N167 and N172 are each glycosylated (N-linked (GlcNAc) asparagine). The helical transmembrane segment at L187 to V207 threads the bilayer. The Cytoplasmic portion of the chain corresponds to T208–K263. A helical transmembrane segment spans residues V264–N284. The Extracellular portion of the chain corresponds to D285 to M293. A helical transmembrane segment spans residues P294–L314. The Cytoplasmic segment spans residues K315 to S347. Residues A348 to L368 traverse the membrane as a helical segment. At R369 to E379 the chain is on the extracellular side. The chain crosses the membrane as a helical span at residues L380–C400. The Cytoplasmic segment spans residues S401 to Q416. The helical transmembrane segment at V417 to F437 threads the bilayer. Residues H438–T484 lie on the Extracellular side of the membrane. The helical transmembrane segment at I485–V505 threads the bilayer. Over V506 to L759 the chain is Cytoplasmic. The STAS domain occupies E530–A742. A phosphoserine; by PKC mark is found at N553 and K582. Position 616 is a phosphoserine (S616). A disordered region spans residues G636–T657. S752 and S755 each carry phosphoserine.

It belongs to the SLC26A/SulP transporter (TC 2.A.53) family. As to quaternary structure, interacts (via C-terminal domain) with PDZK1 (via C-terminal PDZ domain); the interaction induces chloride and oxalate exchange transport. Interacts with CFTR and SLC26A3. Interacts with AHCYL1; the interaction increases SLC26A6 activity. Interacts with NHERF1 (via the PDZ domains) and NHERF2 (via the PDZ domains). Interacts (via C-terminal cytoplasmic domain) with CA2; the interaction stimulates chloride-bicarbonate exchange activity. In terms of assembly, interacts with NHERF1 (via the PDZ domains) and NHERF2 (via the PDZ domains). Phosphorylated on serine residues by PKC; the phosphorylation disrupts interaction with carbonic anhydrase CA2 and reduces bicarbonate transport activity in a phorbol myristate acetate (PMA)-induced manner. Post-translationally, glycosylation at Asn-167 and Asn-172 positively regulates its chloride oxalate exchanger activity. As to expression, ubiquitous. Highest levels in kidney and pancreas. Lower expression in heart, skeletal muscle, liver and placenta. Also found in lung and brain. In terms of tissue distribution, ubiquitously expressed. Highest levels expressed in the kidney and pancreas. Expressed weakly in placenta, lung, liver and pancreas. As to expression, expressed in heart, brain, placenta, lung, liver, kidney, pancreas, spleen, thymus, prostate, testis and ovary.

The protein resides in the cell membrane. Its subcellular location is the apical cell membrane. It localises to the cytoplasmic vesicle membrane. It is found in the microsome. The protein localises to the basolateral cell membrane. The enzyme catalyses 2 hydrogencarbonate(in) + chloride(out) = 2 hydrogencarbonate(out) + chloride(in). It carries out the reaction oxalate(in) + chloride(out) = oxalate(out) + chloride(in). It catalyses the reaction oxalate(in) + formate(out) = oxalate(out) + formate(in). The catalysed reaction is oxalate(in) + sulfate(out) = oxalate(out) + sulfate(in). The enzyme catalyses 2 hydrogencarbonate(out) + sulfate(in) = 2 hydrogencarbonate(in) + sulfate(out). Oxalate transport activity is inhibited by 4,4'-diisothiocyanatostilbene-2,2'-disulfonic acid (DIDS). Its activity is regulated as follows. Chloride, bicarbonate and sulfate transport activities are inhibited by 4,4'-diisothiocyanatostilbene-2,2'-disulfonic acid (DIDS). Apical membrane anion-exchanger with wide epithelial distribution that plays a role as a component of the pH buffering system for maintaining acid-base homeostasis. Acts as a versatile DIDS-sensitive inorganic and organic anion transporter that mediates the uptake of monovalent anions like chloride, bicarbonate, formate and hydroxyl ion and divalent anions like sulfate and oxalate. Functions in multiple exchange modes involving pairs of these anions, which include chloride-bicarbonate, chloride-oxalate, oxalate-formate, oxalate-sulfate and chloride-formate exchange. Apical membrane chloride-bicarbonate exchanger that mediates luminal chloride absorption and bicarbonate secretion by the small intestinal brush border membrane and contributes to intracellular pH regulation in the duodenal upper villous epithelium during proton-coupled peptide absorption, possibly by providing a bicarbonate import pathway. Also mediates intestinal chloride absorption and oxalate secretion, thereby preventing hyperoxaluria and calcium oxalate urolithiasis. Transepithelial oxalate secretion, chloride-formate, chloride-oxalate and chloride-bicarbonate transport activities in the duodenum are inhibited by PKC activation in a calcium-independent manner. The apical membrane chloride-bicarbonate exchanger also provides a major route for fluid and bicarbonate secretion into the proximal tubules of the kidney as well as into the proximal part of the interlobular pancreatic ductal tree, where it mediates electrogenic chloride-bicarbonate exchange with a chloride-bicarbonate stoichiometry of 1:2, and hence will dilute and alkalinize protein-rich acinar secretion. Also mediates the transcellular sulfate absorption and oxalate secretion across the apical membrane in the duodenum and the formate ion efflux at the apical brush border of cells in the proximal tubules of kidney. Plays a role in sperm capacitation by increasing intracellular pH. Its function is as follows. Apical membrane chloride-bicarbonate exchanger. Its association with carbonic anhydrase CA2 forms a bicarbonate transport metabolon; hence maximizes the local concentration of bicarbonate at the transporter site. The sequence is that of Solute carrier family 26 member 6 (SLC26A6) from Homo sapiens (Human).